Consider the following 266-residue polypeptide: Dickkopf-related protein 1 (266 aa).

The first 31 residues, Met-1–Ala-31, serve as a signal peptide directing secretion. Ser-61 carries O-linked (GalNAc...) serine glycosylation. 10 disulfides stabilise this stretch: Cys-85/Cys-97, Cys-91/Cys-111, Cys-114/Cys-128, Cys-121/Cys-133, Cys-127/Cys-138, Cys-189/Cys-201, Cys-195/Cys-210, Cys-200/Cys-237, Cys-220/Cys-245, and Cys-239/Cys-263. Positions Cys-85 to Cys-138 are DKK-type Cys-1. Positions Cys-189–Cys-263 are DKK-type Cys-2. Residue Asn-256 is glycosylated (N-linked (GlcNAc...) asparagine).

The protein belongs to the dickkopf family. Interacts with LRP6. Interacts (via the C-terminal Cys-rich domain) with LRP5 (via beta-propeller regions 3 and 4); the interaction, enhanced by MESD and or KREMEN, antagonizes Wnt-mediated signaling. Forms a ternary complex with LRP6 and KREM1. Interacts with KREM1. As to expression, placenta.

Its subcellular location is the secreted. Antagonizes canonical Wnt signaling by inhibiting LRP5/6 interaction with Wnt and by forming a ternary complex with the transmembrane protein KREMEN that promotes internalization of LRP5/6. DKKs play an important role in vertebrate development, where they locally inhibit Wnt regulated processes such as antero-posterior axial patterning, limb development, somitogenesis and eye formation. In the adult, Dkks are implicated in bone formation and bone disease, cancer and Alzheimer disease. Inhibits the pro-apoptotic function of KREMEN1 in a Wnt-independent manner, and has anti-apoptotic activity. This Homo sapiens (Human) protein is Dickkopf-related protein 1 (DKK1).